We begin with the raw amino-acid sequence, 612 residues long: Protein lin-61 (612 aa).

MBT repeat units lie at residues 143-249 (YLWE…MDKI), 263-380 (NDMV…GYQL), 381-501 (NAKK…LVPP), and 508-607 (FRWD…LQPP).

As to quaternary structure, interacts preferentially with histone H3 that is dimethylated or trimethylated at 'Lys-9'.

It localises to the nucleus. The protein resides in the chromosome. In terms of biological role, synthetic multivulva class B (synMuvB) protein required to repress the induction of vulval development by Ras signaling. Unlike other synMuv proteins it does not associate with the multiprotein DRM complex and the NuRD-like complex. Interaction with methylated histone H3 is essential for vulva development. It has a role in maintaining genome stability. The protein is Protein lin-61 (lin-61) of Caenorhabditis elegans.